A 511-amino-acid polypeptide reads, in one-letter code: Vesicular acetylcholine transporter (511 aa).

At methionine 1–lysine 36 the chain is on the cytoplasmic side. A helical membrane pass occupies residues isoleucine 37–valine 57. The Lumenal, vesicle segment spans residues proline 58–glycine 108. 3 N-linked (GlcNAc...) asparagine glycosylation sites follow: asparagine 80, asparagine 83, and asparagine 88. A helical membrane pass occupies residues valine 109–isoleucine 129. At aspartate 130–aspartate 135 the chain is on the cytoplasmic side. A helical membrane pass occupies residues isoleucine 136–glutamate 156. The Lumenal, vesicle portion of the chain corresponds to serine 157–arginine 165. A helical transmembrane segment spans residues serine 166 to lysine 186. Residues tyrosine 187 to leucine 197 lie on the Cytoplasmic side of the membrane. The chain crosses the membrane as a helical span at residues glycine 198 to leucine 218. Residues tyrosine 219–tryptophan 225 are Lumenal, vesicle-facing. A helical transmembrane segment spans residues valine 226 to valine 246. Residues threonine 247–methionine 267 are Cytoplasmic-facing. Residues isoleucine 268–phenylalanine 288 traverse the membrane as a helical segment. Topologically, residues leucine 289–tryptophan 306 are lumenal, vesicle. Residue asparagine 302 is glycosylated (N-linked (GlcNAc...) asparagine). Residues glutamine 307–valine 327 traverse the membrane as a helical segment. Topologically, residues lysine 328 to glutamine 337 are cytoplasmic. A helical membrane pass occupies residues tryptophan 338–cysteine 358. The Lumenal, vesicle segment spans residues arginine 359–glutamate 363. Residues leucine 364–proline 384 form a helical membrane-spanning segment. The Cytoplasmic segment spans residues threonine 385 to serine 400. A helical transmembrane segment spans residues valine 401–glycine 421. The Lumenal, vesicle portion of the chain corresponds to glutamine 422 to glycine 428. Residues phenylalanine 429–phenylalanine 449 traverse the membrane as a helical segment. At leucine 450–glutamate 511 the chain is on the cytoplasmic side. The segment at glutamate 485–glutamate 511 is disordered.

It belongs to the major facilitator superfamily. Vesicular transporter family. High expression in the electric lobe of the brain.

It localises to the membrane. Functionally, involved in acetylcholine transport into synaptic vesicles. This chain is Vesicular acetylcholine transporter, found in Torpedo marmorata (Marbled electric ray).